The primary structure comprises 1313 residues: Kinesin-like protein KIN-12B (1313 aa).

The tract at residues 1–74 is disordered; that stretch reads MKHFMMPRNA…PPRPPSSNPL (74 aa). Positions 17–26 are enriched in polar residues; sequence ESQSPNPSLT. The region spanning 96–431 is the Kinesin motor domain; that stretch reads GVKVIVRMKP…LRFAQRAKAI (336 aa). ATP is bound at residue 170 to 177; sequence GQTGSGKT. Microtubules-binding regions lie at residues 298-302, 331-337, and 380-384; these read SSRSH, VDLAGSE, and HIPYR. Residues 429–467 form a neck region; it reads KAIQNKAIVNEVMQDDVNFLREVIRQLRDELQRVKDDKG. The tract at residues 685 to 709 is disordered; sequence ESASPKIRNSRKSLRTTSMSTASQK. Polar residues predominate over residues 699-708; that stretch reads RTTSMSTASQ. Coiled-coil stretches lie at residues 932–1003, 1062–1130, and 1167–1241; these read LDEE…YTDS, AEEL…RIRE, and EKEV…TEIS.

Belongs to the TRAFAC class myosin-kinesin ATPase superfamily. Kinesin family. KIN-12 subfamily. Homodimer and heterodimer with KIN12A. Interacts with TIO.

Its subcellular location is the cytoplasm. The protein localises to the cytoskeleton. It localises to the phragmoplast. In terms of biological role, plus-end directed kinesin-like motor enzyme that plays a critical role in the organization of phragmoplast microtubules during cytokinesis. Constitutes a signaling module in association with serine/threonine-protein kinase TIO that is required to support phragmoplast expansion and cell-plate growth in plant cells. This Arabidopsis thaliana (Mouse-ear cress) protein is Kinesin-like protein KIN-12B.